The chain runs to 527 residues: Cyclin-L1 (527 aa).

Positions 1-37 are disordered; it reads MASGPHPTSTAAAASASSAAPSAGGSSSGTTTTTTTT. Cyclin-like stretches follow at residues 89 to 191 and 204 to 288; these read ELIQ…RVLK and KIIV…ETLR. A Phosphothreonine modification is found at threonine 326. The tract at residues 327 to 527 is disordered; it reads PALSTLGGFS…SRSGHGRHRR (201 aa). A phosphoserine mark is found at serine 336 and serine 339. Residues lysine 340 and lysine 348 each participate in a glycyl lysine isopeptide (Lys-Gly) (interchain with G-Cter in SUMO2) cross-link. Over residues 343-353 the composition is skewed to basic and acidic residues; the sequence is SPREVKAEEKS. A phosphoserine mark is found at serine 353 and serine 356. A compositionally biased stretch (basic and acidic residues) spans 362-371; the sequence is VKKEPEDRQQ. Lysine 363 participates in a covalent cross-link: Glycyl lysine isopeptide (Lys-Gly) (interchain with G-Cter in SUMO2). A Phosphoserine modification is found at serine 375. 4 stretches are compositionally biased toward basic residues: residues 383–419, 439–453, 461–477, and 487–499; these read DSKR…RRSR, RRHH…KAKH, SNRH…RSQS, and KKHR…HRDR. The segment at 391-433 is RS; sequence RSASRSRSRTRSRSRSHTPRRHYNNRRSRSGTYSSRSRSRSRS. At serine 446 the chain carries Phosphoserine. Residues 500 to 509 are compositionally biased toward basic and acidic residues; the sequence is RERSRSFERS. A compositionally biased stretch (basic residues) spans 510–527; the sequence is HKGKHHGGSRSGHGRHRR.

It belongs to the cyclin family. Cyclin L subfamily. As to quaternary structure, interacts with POLR2A via its hyperphosphorylated C-terminal domain (CTD). Interacts with CDK11A, CDK11B, CDK12 and CDK13. May form a ternary complex with CDK11B and casein kinase II (CKII). Interacts with pre-mRNA-splicing factors, including at least SRSF1, SRSF2 AND SRSF7/SLU7. In terms of tissue distribution, ubiquitous with higher level in liver; expressed in striatal neurons.

The protein resides in the nucleus speckle. It localises to the nucleus. It is found in the nucleoplasm. Its function is as follows. Involved in pre-mRNA splicing. Functions in association with cyclin-dependent kinases (CDKs). May play a role in the regulation of RNA polymerase II (pol II). Inhibited by the CDK-specific inhibitor CDKN1A/p21. The protein is Cyclin-L1 (Ccnl1) of Rattus norvegicus (Rat).